Reading from the N-terminus, the 396-residue chain is Phosphoglycerate kinase (396 aa).

Substrate-binding positions include 22-24 (DLN), Arg-37, 60-63 (HFGR), Arg-118, and Arg-151. ATP-binding positions include Lys-201, Glu-323, and 353 to 356 (GGDT).

It belongs to the phosphoglycerate kinase family. As to quaternary structure, monomer.

It is found in the cytoplasm. It catalyses the reaction (2R)-3-phosphoglycerate + ATP = (2R)-3-phospho-glyceroyl phosphate + ADP. It participates in carbohydrate degradation; glycolysis; pyruvate from D-glyceraldehyde 3-phosphate: step 2/5. The chain is Phosphoglycerate kinase from Xanthobacter autotrophicus (strain ATCC BAA-1158 / Py2).